We begin with the raw amino-acid sequence, 562 residues long: UPF0649 protein C1442.02 (562 aa).

Phosphoserine occurs at positions 285 and 286. Residues 288–308 (DEEIAKNADVPAEVDNNSTKA) form a disordered region.

Belongs to the UPF0649 family.

Its subcellular location is the cytoplasm. It localises to the nucleus. This chain is UPF0649 protein C1442.02, found in Schizosaccharomyces pombe (strain 972 / ATCC 24843) (Fission yeast).